Here is a 237-residue protein sequence, read N- to C-terminus: 4-hydroxy-tetrahydrodipicolinate reductase (237 aa).

NAD(+)-binding positions include 11 to 16, 92 to 94, and 116 to 119; these read GASGRM, GTT, and GSNF. The active-site Proton donor/acceptor is His148. A (S)-2,3,4,5-tetrahydrodipicolinate-binding site is contributed by His149. The Proton donor role is filled by Lys152. Residue 158-159 coordinates (S)-2,3,4,5-tetrahydrodipicolinate; that stretch reads GS.

This sequence belongs to the DapB family.

It is found in the cytoplasm. It catalyses the reaction (S)-2,3,4,5-tetrahydrodipicolinate + NAD(+) + H2O = (2S,4S)-4-hydroxy-2,3,4,5-tetrahydrodipicolinate + NADH + H(+). The catalysed reaction is (S)-2,3,4,5-tetrahydrodipicolinate + NADP(+) + H2O = (2S,4S)-4-hydroxy-2,3,4,5-tetrahydrodipicolinate + NADPH + H(+). The protein operates within amino-acid biosynthesis; L-lysine biosynthesis via DAP pathway; (S)-tetrahydrodipicolinate from L-aspartate: step 4/4. Functionally, catalyzes the conversion of 4-hydroxy-tetrahydrodipicolinate (HTPA) to tetrahydrodipicolinate. The protein is 4-hydroxy-tetrahydrodipicolinate reductase of Xylella fastidiosa (strain 9a5c).